The primary structure comprises 337 residues: 1-aminocyclopropane-1-carboxylate deaminase (337 aa).

At Lys50 the chain carries N6-(pyridoxal phosphate)lysine. Catalysis depends on Ser77, which acts as the Nucleophile.

It belongs to the ACC deaminase/D-cysteine desulfhydrase family. Homotrimer. Pyridoxal 5'-phosphate is required as a cofactor.

It carries out the reaction 1-aminocyclopropane-1-carboxylate + H2O = 2-oxobutanoate + NH4(+). Its function is as follows. Catalyzes a cyclopropane ring-opening reaction, the irreversible conversion of 1-aminocyclopropane-1-carboxylate (ACC) to ammonia and alpha-ketobutyrate. Allows growth on ACC as a nitrogen source. The protein is 1-aminocyclopropane-1-carboxylate deaminase of Rhizobium rhizogenes (strain K84 / ATCC BAA-868) (Agrobacterium radiobacter).